A 473-amino-acid polypeptide reads, in one-letter code: 6-phospho-beta-glucosidase (473 aa).

The Proton donor role is filled by glutamate 174. Residue glutamate 366 is the Nucleophile of the active site.

Belongs to the glycosyl hydrolase 1 family.

The enzyme catalyses 6-phospho-beta-D-glucosyl-(1-&gt;4)-D-glucose + H2O = D-glucose 6-phosphate + D-glucose. The chain is 6-phospho-beta-glucosidase (abgA) from Clostridium longisporum.